The primary structure comprises 343 residues: N-acetyl-gamma-glutamyl-phosphate reductase (343 aa).

Cys149 is a catalytic residue.

It belongs to the NAGSA dehydrogenase family. Type 1 subfamily.

Its subcellular location is the cytoplasm. It catalyses the reaction N-acetyl-L-glutamate 5-semialdehyde + phosphate + NADP(+) = N-acetyl-L-glutamyl 5-phosphate + NADPH + H(+). It functions in the pathway amino-acid biosynthesis; L-arginine biosynthesis; N(2)-acetyl-L-ornithine from L-glutamate: step 3/4. In terms of biological role, catalyzes the NADPH-dependent reduction of N-acetyl-5-glutamyl phosphate to yield N-acetyl-L-glutamate 5-semialdehyde. The chain is N-acetyl-gamma-glutamyl-phosphate reductase from Methanococcus maripaludis (strain C6 / ATCC BAA-1332).